The sequence spans 175 residues: MHLVFLLMKFQMKLNESIRYASILVIDESGNPLGVFTSEQGRQLAAKKGLDLLLINPNADPPVCKIVNYGKYKFELEKKAKAKRKNQSQLKEIQMSYNMEEHDYQVRLSQACKFLKAGDKVKVTLMLKGREMQHLELAQNKMAQFQADVSSLAQLAKPPSQEGRNLSAIFVPKKS.

The protein belongs to the IF-3 family. Monomer.

The protein resides in the plastid. The protein localises to the chloroplast. Functionally, IF-3 binds to the 30S ribosomal subunit and shifts the equilibrium between 70S ribosomes and their 50S and 30S subunits in favor of the free subunits, thus enhancing the availability of 30S subunits on which protein synthesis initiation begins. The sequence is that of Translation initiation factor IF-3, chloroplastic from Cyanidioschyzon merolae (strain NIES-3377 / 10D) (Unicellular red alga).